The chain runs to 245 residues: Adenosylcobinamide-GDP ribazoletransferase (245 aa).

Helical transmembrane passes span 31 to 51 (FGRAVLCYPLVGVLIGVVLYG), 61 to 81 (PLLQAALLLSLWVALSGALHL), 113 to 133 (AAVVALVLVLLLKFGALAALL), 138 to 158 (PGLLLLAPWLARSSLPLLFLT), and 192 to 212 (LAFGLSGLLALLVTLMLFAWL).

This sequence belongs to the CobS family. Mg(2+) is required as a cofactor.

The protein localises to the cell inner membrane. The catalysed reaction is alpha-ribazole + adenosylcob(III)inamide-GDP = adenosylcob(III)alamin + GMP + H(+). It carries out the reaction alpha-ribazole 5'-phosphate + adenosylcob(III)inamide-GDP = adenosylcob(III)alamin 5'-phosphate + GMP + H(+). The protein operates within cofactor biosynthesis; adenosylcobalamin biosynthesis; adenosylcobalamin from cob(II)yrinate a,c-diamide: step 7/7. In terms of biological role, joins adenosylcobinamide-GDP and alpha-ribazole to generate adenosylcobalamin (Ado-cobalamin). Also synthesizes adenosylcobalamin 5'-phosphate from adenosylcobinamide-GDP and alpha-ribazole 5'-phosphate. The protein is Adenosylcobinamide-GDP ribazoletransferase of Pseudomonas paraeruginosa (strain DSM 24068 / PA7) (Pseudomonas aeruginosa (strain PA7)).